Consider the following 678-residue polypeptide: Platelet endothelial cell adhesion molecule (678 aa).

A signal peptide spans 1-17 (MLLALLLTMLLYASLQA). Residues 18 to 589 (QENSFTINSI…VRVFLAPWKK (572 aa)) are Extracellular-facing. Ig-like C2-type domains are found at residues 40 to 126 (GQKL…PEVT), 135 to 213 (GGIV…FIRS), 225 to 309 (PKFQ…ILVN), 315 to 391 (PRPK…LVPV), 413 to 472 (GQII…NCHS), and 488 to 577 (PVDE…RSGP). The cysteines at positions 47 and 99 are disulfide-linked. N-linked (GlcNAc...) asparagine glycans are attached at residues Asn-74 and Asn-141. Cystine bridges form between Cys-142-Cys-195 and Cys-245-Cys-293. 5 N-linked (GlcNAc...) asparagine glycosylation sites follow: Asn-309, Asn-345, Asn-360, Asn-424, and Asn-540. 3 disulfides stabilise this stretch: Cys-336/Cys-375, Cys-420/Cys-465, and Cys-512/Cys-561. A helical transmembrane segment spans residues 590–610 (GLIAVVVIGVVIAALIVAAKY). Over 611-678 (YFLRKAKAKQ…EPHQENGRLP (68 aa)) the chain is Cytoplasmic. The tract at residues 634–653 (NSNSEKVSEPSVETNSHYDS) is disordered. The ITIM motif motif lies at 658–663 (VEYTEV). Position 660 is a phosphotyrosine; by FER (Tyr-660).

As to quaternary structure, trans-homodimer (via Ig-like C2-type 1 and Ig-like C2-type 2 domains); trans-homodimerization is required for cell-cell interaction. Forms a complex with BDKRB2 and GNAQ. Interacts with BDKRB2 and GNAQ. Interacts with PTPN11. Interacts with FER. Interacts with CD177; the interaction is Ca(2+)-dependent; the interaction is direct. In terms of processing, phosphorylated on Ser and Tyr residues after cellular activation. In endothelial cells Fyn mediates mechanical-force (stretch or pull) induced tyrosine phosphorylation. Phosphorylated on tyrosine residues by FER and FES in response to FCER1 activation. Post-translationally, palmitoylation by ZDHHC21 is necessary for cell surface expression in endothelial cells and enrichment in membrane rafts.

The protein localises to the cell membrane. Its subcellular location is the membrane raft. It is found in the cell junction. In terms of biological role, cell adhesion molecule which is required for leukocyte transendothelial migration (TEM) under most inflammatory conditions. Tyr-660 plays a critical role in TEM and is required for efficient trafficking of PECAM1 to and from the lateral border recycling compartment (LBRC) and is also essential for the LBRC membrane to be targeted around migrating leukocytes. Trans-homophilic interaction may play a role in endothelial cell-cell adhesion via cell junctions. Heterophilic interaction with CD177 plays a role in transendothelial migration of neutrophils. Homophilic ligation of PECAM1 prevents macrophage-mediated phagocytosis of neighboring viable leukocytes by transmitting a detachment signal. Promotes macrophage-mediated phagocytosis of apoptotic leukocytes by tethering them to the phagocytic cells; PECAM1-mediated detachment signal appears to be disabled in apoptotic leukocytes. Modulates bradykinin receptor BDKRB2 activation. Regulates bradykinin- and hyperosmotic shock-induced ERK1/2 activation in endothelial cells. Induces susceptibility to atherosclerosis. This chain is Platelet endothelial cell adhesion molecule (Pecam1), found in Rattus norvegicus (Rat).